Consider the following 232-residue polypeptide: Orotate phosphoribosyltransferase (232 aa).

5-phospho-alpha-D-ribose 1-diphosphate-binding positions include arginine 107, lysine 108, lysine 111, histidine 113, and 133–141 (EDLTTAGGS). Orotate is bound at residue threonine 137.

This sequence belongs to the purine/pyrimidine phosphoribosyltransferase family. PyrE subfamily. As to quaternary structure, homodimer. Mg(2+) serves as cofactor.

The catalysed reaction is orotidine 5'-phosphate + diphosphate = orotate + 5-phospho-alpha-D-ribose 1-diphosphate. Its pathway is pyrimidine metabolism; UMP biosynthesis via de novo pathway; UMP from orotate: step 1/2. In terms of biological role, catalyzes the transfer of a ribosyl phosphate group from 5-phosphoribose 1-diphosphate to orotate, leading to the formation of orotidine monophosphate (OMP). The polypeptide is Orotate phosphoribosyltransferase (Sinorhizobium fredii (strain NBRC 101917 / NGR234)).